A 131-amino-acid polypeptide reads, in one-letter code: Superoxide dismutase [Ni] (131 aa).

Residues 1–14 (MLSRLFAPKVKVSA) constitute a propeptide that is removed on maturation. 3 residues coordinate Ni(2+): His15, Cys16, and Cys20.

Belongs to the nickel superoxide dismutase family. As to quaternary structure, homohexamer. The hexameric protein has roughly the shape of a hollow sphere with an outer diameter of 72 Angstroms and a large inner cavity. Ni(2+) is required as a cofactor.

It localises to the cytoplasm. It catalyses the reaction 2 superoxide + 2 H(+) = H2O2 + O2. This is Superoxide dismutase [Ni] (sodN) from Streptomyces seoulensis.